We begin with the raw amino-acid sequence, 1113 residues long: Nucleoporin NUP116/NSP116 (1113 aa).

A disordered region spans residues 1–35; it reads MFGVSRGAFPSATTQPFGSTGSTFGGQQQQQQPVA. FG repeat units lie at residues 2–3, 17–18, 24–25, and 40–41; these read FG. Over residues 13-33 the composition is skewed to low complexity; the sequence is TTQPFGSTGSTFGGQQQQQQP. The interval 49-91 is disordered; sequence TQAPAFGNFGNQTSNSPFGMSGSTTANGTPFGQSQLTNNNASG. Residues 55–58 form a GLFG 1; approximate repeat; it reads GNFG. 3 FG repeats span residues 66–67, 79–80, and 94–95; these read FG. The tract at residues 92–172 is interaction with AFG2; it reads SIFGGMGNNT…AGRKFGTSQN (81 aa). Residues 110–166 are GLE2 binding sequence (GLEBS); it reads VVPNSTAGTSIKPFTTFEEKDPTTGVINVFQSITCMPEYRNFSFEELRFQDYQAGRK. The segment at 160–362 is interaction with MEX67, not KAP95; the sequence is DYQAGRKFGT…AKPASGGLFG (203 aa). FG repeat units lie at residues 167–168 and 189–190; these read FG. One copy of the GLFG 2 repeat lies at 205–208; that stretch reads GLFG. Residues 214 to 217 form a GLFG 3; approximate repeat; sequence GMFG. One copy of the GLFG 4; approximate repeat lies at 224–227; sequence GGFG. The stretch at 235–238 is one GLFG 5 repeat; it reads GLFG. Residues 249 to 250 form an FG 10 repeat; that stretch reads FG. GLFG repeat units lie at residues 259-262, 276-279, and 288-291; these read GLFG. Residues 265-279 are compositionally biased toward low complexity; sequence TNNPTNGTNNTGLFG. A disordered region spans residues 265 to 341; sequence TNNPTNGTNN…SNANANGGAF (77 aa). Residues 280–304 are compositionally biased toward polar residues; sequence QQNSNTNGGLFGQQQNSFGANNVSN. One copy of the FG 11 repeat lies at 297-298; it reads FG. One copy of the GLFG 9; approximate repeat lies at 306-309; sequence GAFG. Residues 327-330 form a GLFG 10; approximate repeat; sequence GIFG. Residues 330 to 341 are compositionally biased toward low complexity; it reads GQSNANANGGAF. The stretch at 339-342 is one GLFG 11; approximate repeat; it reads GAFG. The stretch at 351–352 is one FG 12 repeat; sequence FG. A GLFG 12 repeat occupies 359–362; it reads GLFG. The sufficient for interaction with MEX67 and KAP95 stretch occupies residues 362–535; sequence GQSAGSKAFG…GAKPTGFGNT (174 aa). The stretch at 370–371 is one FG 13 repeat; that stretch reads FG. Residues 371–606 are disordered; it reads GMNTNPTGTT…NPASTSGGLF (236 aa). 4 GLFG repeats span residues 382–385, 395–398, 407–410, and 420–423; these read GLFG. A compositionally biased stretch (low complexity) spans 410–438; it reads GQNNQSQNQSGLFGQQNSSNAFGQPQQQG. An FG 14 repeat occupies 431–432; it reads FG. GLFG repeat units follow at residues 439–442 and 448–451; these read GLFG. A compositionally biased stretch (polar residues) spans 451–464; that stretch reads GQQQGASTFASGNA. Low complexity-rich tracts occupy residues 465–478 and 485–522; these read QNNS…QQQQ and GQQN…QQNN. An FG 15 repeat occupies 470 to 471; the sequence is FG. GLFG repeat units follow at residues 482–485 and 497–500; these read GLFG. FG repeat units lie at residues 510–511, 525–526, and 532–533; these read FG. The span at 532–569 shows a compositional bias: polar residues; sequence FGNTSLFSNSTTNQSNGISGNNLQQQSGGLFQNKQQPA. Residues 536–732 are interaction with KAP95, not MEX67; that stretch reads SLFSNSTTNQ…QSQNALQQQQ (197 aa). GLFG repeat units lie at residues 572–575, 585–588, and 604–607; these read GLFG. Over residues 588-603 the composition is skewed to polar residues; sequence GNNQVANQNNPASTSG. The stretch at 616–617 is one FG 19 repeat; it reads FG. A GLFG 24; approximate repeat occupies 630–633; that stretch reads GIFG. GLFG repeat units lie at residues 648 to 651, 665 to 668, and 683 to 686; these read GLFG. The span at 678-691 shows a compositional bias: low complexity; sequence SNGSTGLFGSNNTS. 2 disordered regions span residues 678-736 and 868-939; these read SNGS…QQQR and SEEK…ENVA. A compositionally biased stretch (polar residues) spans 692-708; the sequence is QSTNAGGLFQNNTSTNT. A compositionally biased stretch (low complexity) spans 719–736; it reads QSMAQSQNALQQQQQQQR. Serine 886 is subject to Phosphoserine. Positions 916-939 are enriched in basic and acidic residues; sequence NDGEDSATKHHSRNMDEENKENVA. A Peptidase S59 domain is found at 967–1109; it reads NENYYISPSL…GTYVFIVNHA (143 aa). The segment at 967–1113 is interaction with NUP82 NPC subcomplex; the sequence is NENYYISPSL…FIVNHAAEQT (147 aa). Positions 969 to 1108 are nucleoporin RNA-binding motif (NRM); the sequence is NYYISPSLDT…SGTYVFIVNH (140 aa).

It belongs to the nucleoporin GLFG family. As to quaternary structure, component of the nuclear pore complex (NPC). NPC constitutes the exclusive means of nucleocytoplasmic transport. NPCs allow the passive diffusion of ions and small molecules and the active, nuclear transport receptor-mediated bidirectional transport of macromolecules such as proteins, RNAs, ribonucleoparticles (RNPs), and ribosomal subunits across the nuclear envelope. Due to its 8-fold rotational symmetry, all subunits are present with 8 copies or multiples thereof. NUP116 interacts with the NUP82 subcomplex and GLE2. Through its FG repeats it interacts with numerous karyopherins including KAP95, PSE1 (GSP1-GDP dependent), MEX67, and to homomeric RNA. Interacts with CEX1. Interacts (via N-terminus) with AFG2 (via N-terminus).

It is found in the nucleus. Its subcellular location is the nuclear pore complex. The protein resides in the nucleus membrane. Functionally, functions as a component of the nuclear pore complex (NPC). NPC components, collectively referred to as nucleoporins (NUPs), can play the role of both NPC structural components and of docking or interaction partners for transiently associated nuclear transport factors. Active directional transport is assured by both, a Phe-Gly (FG) repeat affinity gradient for these transport factors across the NPC and a transport cofactor concentration gradient across the nuclear envelope (GSP1 and GSP2 GTPases associated predominantly with GTP in the nucleus, with GDP in the cytoplasm). Plays an important role in several nuclear export and import pathways including poly(A)+ RNA, tRNA, pre-ribosome, and protein transport. By binding ATPase AFG2, promotes AFG2-mediated release of shuttling protein RLP24 from pre-60S ribosomal particles. The sequence is that of Nucleoporin NUP116/NSP116 (NUP116) from Saccharomyces cerevisiae (strain ATCC 204508 / S288c) (Baker's yeast).